A 146-amino-acid chain; its full sequence is uncharacterized protein (146 aa).

A helical membrane pass occupies residues 6-26 (IPIFVISLSNISHIILAIFFF).

The protein localises to the membrane. This is an uncharacterized protein from Caenorhabditis elegans.